Reading from the N-terminus, the 425-residue chain is Serine--tRNA ligase (425 aa).

Residue 228–230 (TAE) participates in L-serine binding. 259-261 (RSE) serves as a coordination point for ATP. Glu282 is a binding site for L-serine. 346-349 (EIAS) is an ATP binding site. Residue Ser382 coordinates L-serine.

Belongs to the class-II aminoacyl-tRNA synthetase family. Type-1 seryl-tRNA synthetase subfamily. As to quaternary structure, homodimer. The tRNA molecule binds across the dimer.

The protein resides in the cytoplasm. The catalysed reaction is tRNA(Ser) + L-serine + ATP = L-seryl-tRNA(Ser) + AMP + diphosphate + H(+). It carries out the reaction tRNA(Sec) + L-serine + ATP = L-seryl-tRNA(Sec) + AMP + diphosphate + H(+). The protein operates within aminoacyl-tRNA biosynthesis; selenocysteinyl-tRNA(Sec) biosynthesis; L-seryl-tRNA(Sec) from L-serine and tRNA(Sec): step 1/1. Its function is as follows. Catalyzes the attachment of serine to tRNA(Ser). Is also able to aminoacylate tRNA(Sec) with serine, to form the misacylated tRNA L-seryl-tRNA(Sec), which will be further converted into selenocysteinyl-tRNA(Sec). This Rickettsia canadensis (strain McKiel) protein is Serine--tRNA ligase.